The following is a 635-amino-acid chain: Cilia- and flagella-associated protein 206 (635 aa).

The protein belongs to the CFAP206 family.

It localises to the cytoplasm. The protein resides in the cytoskeleton. The protein localises to the cilium axoneme. In terms of biological role, may regulate cilium motility through its role in the assembly of the axonemal RS2 radial spoke. This chain is Cilia- and flagella-associated protein 206, found in Tetrahymena thermophila (strain SB210).